A 524-amino-acid polypeptide reads, in one-letter code: Keratin, type II cytoskeletal 71 (524 aa).

Positions 1–130 (MSRQFTCKSG…DPEIQKVRAQ (130 aa)) are head. The segment at 131 to 166 (EREQIKALNNKFASFIDKVRFLEQQNQVLQTKWELL) is coil 1A. In terms of domain architecture, IF rod spans 131 to 444 (EREQIKALNN…KLLESEECRM (314 aa)). The interval 167–185 (QQLDLNNCKNNLEPILEGH) is linker 1. Residues 186–277 (ISNMRKQLET…CLFEAEMAQI (92 aa)) form a coil 1B region. A linker 12 region spans residues 278–301 (QSHISDMSVILSMDNNRNLDLDSI). The interval 302-440 (IDEVRAQYEE…ATYRKLLESE (139 aa)) is coil 2. The interval 441 to 524 (ECRMSGEYSS…LSTPSKKGGR (84 aa)) is tail. Residues 493-524 (GGENRSRGSASDYKDTLTKGSSLSTPSKKGGR) form a disordered region. A compositionally biased stretch (basic and acidic residues) spans 494–509 (GENRSRGSASDYKDTL). Residues 510 to 524 (TKGSSLSTPSKKGGR) are compositionally biased toward polar residues.

It belongs to the intermediate filament family. As to quaternary structure, heterodimer of a type I and a type II keratin. Associates with KRT16 and/or KRT17. Specifically expressed in the inner root sheath (IRS) of the hair follicle. Present in Henle and the Huxley layers of the IRS, while expression in the cuticle is unsure (at protein level).

The protein localises to the cytoplasm. It is found in the cytoskeleton. Its function is as follows. Plays a central role in hair formation. Essential component of keratin intermediate filaments in the inner root sheath (IRS) of the hair follicle. The chain is Keratin, type II cytoskeletal 71 (Krt71) from Mus musculus (Mouse).